Consider the following 653-residue polypeptide: Multidomain regulatory protein Rv1364c (653 aa).

Phosphothreonine; by PknD occurs at positions 54 and 81. In terms of domain architecture, PAC spans 86 to 142 (SGSEWRLQTDYDGSGVEERYFDFVVTPRRRADGSIEGVQLIVDDVTSRVRARQAAEA). One can recognise a PPM-type phosphatase domain in the interval 177–396 (DIAAEYLVAA…DDVTLLAMQR (220 aa)). Residues aspartate 211 and valine 212 each contribute to the Mn(2+) site. Threonine 299 bears the Phosphothreonine; by PknD mark. Mn(2+) is bound by residues aspartate 328 and aspartate 387. Residue threonine 390 is modified to Phosphothreonine; by PknD. The interval 397–544 (RAPTPPLHIT…TMVRRAAFQQ (148 aa)) is anti-sigma factor kinase region. Serine 506 is modified (phosphoserine; by PknD). Residues threonine 520 and threonine 568 each carry the phosphothreonine; by PknD modification. In terms of domain architecture, STAS spans 546–653 (IDSEFVSLVE…ADTEDIFAQE (108 aa)). A Phosphoserine; by autocatalysis modification is found at serine 600.

In terms of assembly, exists in solution as both monomer and dimer. Both the phosphorylated and unphosphorylated proteins form extended dimers. Interacts with SigF. Can efficiently bind to SigF independently of its autophosphorylation. Interaction between SigF and Rv1364c is reduced significantly upon the phosphorylation of both proteins by PknD. Mn(2+) is required as a cofactor. Mg(2+) serves as cofactor. Autophosphorylated. Phosphorylated by PknD on multiple threonine and serine residues. Phosphorylation is antagonized by the phosphatase activity.

The catalysed reaction is O-phospho-L-seryl-[protein] + H2O = L-seryl-[protein] + phosphate. It carries out the reaction O-phospho-L-threonyl-[protein] + H2O = L-threonyl-[protein] + phosphate. The enzyme catalyses L-seryl-[protein] + ATP = O-phospho-L-seryl-[protein] + ADP + H(+). It catalyses the reaction L-threonyl-[protein] + ATP = O-phospho-L-threonyl-[protein] + ADP + H(+). Its activity is regulated as follows. The phosphatase domain is activated by the anti-sigma factor kinase domain. In terms of biological role, primarily acts as an independent SigF regulator that is sensitive to the osmosensory signal, mediating the cross talk of PknD with the SigF regulon. Possesses both phosphatase and kinase activities. The kinase domain functions as a classic anti-sigma factor-like kinase to phosphorylate the anti-anti-sigma factor domain at the canonical regulatory site, and the phosphatase domain antagonizes this activity. The polypeptide is Multidomain regulatory protein Rv1364c (Mycobacterium tuberculosis (strain ATCC 25618 / H37Rv)).